Consider the following 237-residue polypeptide: Ribosomal RNA small subunit methyltransferase G (237 aa).

Residues Gly78, Phe83, 129-130 (AE), and Arg146 each bind S-adenosyl-L-methionine.

Belongs to the methyltransferase superfamily. RNA methyltransferase RsmG family.

Its subcellular location is the cytoplasm. In terms of biological role, specifically methylates the N7 position of a guanine in 16S rRNA. This Mesoplasma florum (strain ATCC 33453 / NBRC 100688 / NCTC 11704 / L1) (Acholeplasma florum) protein is Ribosomal RNA small subunit methyltransferase G.